A 478-amino-acid polypeptide reads, in one-letter code: Proline--tRNA ligase (478 aa).

The protein belongs to the class-II aminoacyl-tRNA synthetase family. ProS type 3 subfamily. Homodimer.

The protein localises to the cytoplasm. The catalysed reaction is tRNA(Pro) + L-proline + ATP = L-prolyl-tRNA(Pro) + AMP + diphosphate. In terms of biological role, catalyzes the attachment of proline to tRNA(Pro) in a two-step reaction: proline is first activated by ATP to form Pro-AMP and then transferred to the acceptor end of tRNA(Pro). The protein is Proline--tRNA ligase of Clostridium botulinum (strain ATCC 19397 / Type A).